Here is a 103-residue protein sequence, read N- to C-terminus: uncharacterized protein (103 aa).

This is an uncharacterized protein from Shigella flexneri.